Reading from the N-terminus, the 247-residue chain is Centromere protein H (247 aa).

Met-1 carries the post-translational modification N-acetylmethionine. A compositionally biased stretch (acidic residues) spans 1 to 14 (MEEQPQMQDADEPA). Residues 1–34 (MEEQPQMQDADEPADSGGEGRAGGPPQVAGAQAA) are disordered. At Ser-16 the chain carries Phosphoserine. Over residues 24–34 (GPPQVAGAQAA) the composition is skewed to low complexity. Positions 47 to 192 (RAQTKQQLLE…KIDLDSMENS (146 aa)) form a coiled coil. Lys-67 is covalently cross-linked (Glycyl lysine isopeptide (Lys-Gly) (interchain with G-Cter in SUMO2)). Thr-68 carries the post-translational modification Phosphothreonine.

The protein belongs to the CENP-H/MCM16 family. In terms of assembly, self-associates. Component of the CENPA-NAC complex, at least composed of CENPA, CENPC, CENPH, CENPM, CENPN, CENPT and CENPU. The CENPA-NAC complex interacts with the CENPA-CAD complex, composed of CENPI, CENPK, CENPL, CENPO, CENPP, CENPQ, CENPR and CENPS. Interacts directly with CENPK. Interacts with KIF2C and NDC80. Interacts with TRIM36.

It is found in the nucleus. It localises to the chromosome. Its subcellular location is the centromere. The protein localises to the kinetochore. Functionally, component of the CENPA-NAC (nucleosome-associated) complex, a complex that plays a central role in assembly of kinetochore proteins, mitotic progression and chromosome segregation. The CENPA-NAC complex recruits the CENPA-CAD (nucleosome distal) complex and may be involved in incorporation of newly synthesized CENPA into centromeres. Required for chromosome congression and efficiently align the chromosomes on a metaphase plate. This is Centromere protein H from Homo sapiens (Human).